Consider the following 317-residue polypeptide: 4-hydroxy-3-methylbut-2-enyl diphosphate reductase (317 aa).

Residue cysteine 12 coordinates [4Fe-4S] cluster. Residues histidine 41 and histidine 74 each coordinate (2E)-4-hydroxy-3-methylbut-2-enyl diphosphate. Histidine 41 and histidine 74 together coordinate dimethylallyl diphosphate. 2 residues coordinate isopentenyl diphosphate: histidine 41 and histidine 74. Cysteine 97 contributes to the [4Fe-4S] cluster binding site. Residue histidine 125 coordinates (2E)-4-hydroxy-3-methylbut-2-enyl diphosphate. Histidine 125 is a dimethylallyl diphosphate binding site. Histidine 125 provides a ligand contact to isopentenyl diphosphate. Residue glutamate 127 is the Proton donor of the active site. A (2E)-4-hydroxy-3-methylbut-2-enyl diphosphate-binding site is contributed by threonine 168. Cysteine 198 contributes to the [4Fe-4S] cluster binding site. Serine 226, serine 227, asparagine 228, and serine 270 together coordinate (2E)-4-hydroxy-3-methylbut-2-enyl diphosphate. Dimethylallyl diphosphate contacts are provided by serine 226, serine 227, asparagine 228, and serine 270. Residues serine 226, serine 227, asparagine 228, and serine 270 each coordinate isopentenyl diphosphate.

Belongs to the IspH family. Homodimer. The cofactor is [4Fe-4S] cluster.

The enzyme catalyses isopentenyl diphosphate + 2 oxidized [2Fe-2S]-[ferredoxin] + H2O = (2E)-4-hydroxy-3-methylbut-2-enyl diphosphate + 2 reduced [2Fe-2S]-[ferredoxin] + 2 H(+). It carries out the reaction dimethylallyl diphosphate + 2 oxidized [2Fe-2S]-[ferredoxin] + H2O = (2E)-4-hydroxy-3-methylbut-2-enyl diphosphate + 2 reduced [2Fe-2S]-[ferredoxin] + 2 H(+). Its pathway is isoprenoid biosynthesis; dimethylallyl diphosphate biosynthesis; dimethylallyl diphosphate from (2E)-4-hydroxy-3-methylbutenyl diphosphate: step 1/1. It participates in isoprenoid biosynthesis; isopentenyl diphosphate biosynthesis via DXP pathway; isopentenyl diphosphate from 1-deoxy-D-xylulose 5-phosphate: step 6/6. Its function is as follows. Catalyzes the conversion of 1-hydroxy-2-methyl-2-(E)-butenyl 4-diphosphate (HMBPP) into a mixture of isopentenyl diphosphate (IPP) and dimethylallyl diphosphate (DMAPP). Acts in the terminal step of the DOXP/MEP pathway for isoprenoid precursor biosynthesis. This Serratia proteamaculans (strain 568) protein is 4-hydroxy-3-methylbut-2-enyl diphosphate reductase.